Here is a 149-residue protein sequence, read N- to C-terminus: Calmodulin (149 aa).

An N-acetylalanine modification is found at A2. 4 consecutive EF-hand domains span residues 8–43, 44–79, 81–116, and 117–149; these read EQIAEFKEAFSLFDKDGDGTITTKELGTVMRSLGQN, PTEAELQDMINEVDADGNGTIDFPEFLTMMARKMKD, DSEEEIREAFRVFDKDGNGFISAAELRHVMTNLGEK, and LTDEEVDEMIREADIDGDGQVNYEEFVTMMTTK. 14 residues coordinate Ca(2+): D21, D23, D25, T27, E32, D57, D59, N61, T63, E68, D94, D96, N98, and E105. The residue at position 116 (K116) is an N6,N6,N6-trimethyllysine. D130, D132, D134, Q136, and E141 together coordinate Ca(2+).

The protein belongs to the calmodulin family. Interacts (in the presence of Ca(2+)) with pde-1, madf-3, rpl-7A, tax-6, efk-1, npp-1, obr-4, sos-1, akt-1, unc-13, tag-196, ugt-48, nmy-2, F27D4.4, ddx-23, efa-6 and R11H6.4.

Functionally, calmodulin mediates the control of a large number of enzymes, ion channels and other proteins by Ca(2+). Among the enzymes to be stimulated by the calmodulin-Ca(2+) complex are a number of protein kinases and phosphatases. This is Calmodulin (cmd-1) from Caenorhabditis elegans.